The sequence spans 284 residues: 2-dehydro-3-deoxyphosphooctonate aldolase (284 aa).

Belongs to the KdsA family.

Its subcellular location is the cytoplasm. It catalyses the reaction D-arabinose 5-phosphate + phosphoenolpyruvate + H2O = 3-deoxy-alpha-D-manno-2-octulosonate-8-phosphate + phosphate. Its pathway is carbohydrate biosynthesis; 3-deoxy-D-manno-octulosonate biosynthesis; 3-deoxy-D-manno-octulosonate from D-ribulose 5-phosphate: step 2/3. It participates in bacterial outer membrane biogenesis; lipopolysaccharide biosynthesis. The sequence is that of 2-dehydro-3-deoxyphosphooctonate aldolase from Serratia proteamaculans (strain 568).